A 1269-amino-acid chain; its full sequence is DNA-directed RNA polymerase subunit beta'' (1269 aa).

The Zn(2+) site is built by Cys226, Cys301, Cys308, and Cys311.

This sequence belongs to the RNA polymerase beta' chain family. RpoC2 subfamily. In plastids the minimal PEP RNA polymerase catalytic core is composed of four subunits: alpha, beta, beta', and beta''. When a (nuclear-encoded) sigma factor is associated with the core the holoenzyme is formed, which can initiate transcription. Requires Zn(2+) as cofactor.

The protein localises to the plastid. It localises to the chloroplast. The enzyme catalyses RNA(n) + a ribonucleoside 5'-triphosphate = RNA(n+1) + diphosphate. Functionally, DNA-dependent RNA polymerase catalyzes the transcription of DNA into RNA using the four ribonucleoside triphosphates as substrates. In Cyanidium caldarium (Red alga), this protein is DNA-directed RNA polymerase subunit beta''.